We begin with the raw amino-acid sequence, 586 residues long: Potassium-transporting ATPase potassium-binding subunit (586 aa).

The next 12 helical transmembrane spans lie at 11–31 (LFLV…AKVF), 67–87 (AVAV…ILML), 136–156 (GLAV…IAVI), 179–199 (LYVL…QGVI), 279–299 (VEIF…GVMV), 306–326 (WAIL…LQGV), 351–371 (FGLA…CGAV), 381–401 (LGGM…GGVG), 403–423 (GLYT…LMIG), 442–462 (IITV…AMIT), 507–527 (ILGS…VLAM), and 551–571 (FALW…FPAL).

This sequence belongs to the KdpA family. As to quaternary structure, the system is composed of three essential subunits: KdpA, KdpB and KdpC.

The protein resides in the cell inner membrane. In terms of biological role, part of the high-affinity ATP-driven potassium transport (or Kdp) system, which catalyzes the hydrolysis of ATP coupled with the electrogenic transport of potassium into the cytoplasm. This subunit binds the periplasmic potassium ions and delivers the ions to the membrane domain of KdpB through an intramembrane tunnel. In Geobacter metallireducens (strain ATCC 53774 / DSM 7210 / GS-15), this protein is Potassium-transporting ATPase potassium-binding subunit.